We begin with the raw amino-acid sequence, 110 residues long: PCNA-associated factor (110 aa).

Lys15 participates in a covalent cross-link: Glycyl lysine isopeptide (Lys-Gly) (interchain with G-Cter in ubiquitin). The D-box motif lies at 23–34; sequence RKVLGSSTFVTN. Lys24 is subject to N6-acetyllysine; alternate. A Glycyl lysine isopeptide (Lys-Gly) (interchain with G-Cter in ubiquitin); alternate cross-link involves residue Lys24. Position 28 is a phosphoserine (Ser28). Residues 29-39 show a composition bias toward low complexity; it reads STFVTNSSGSS. Positions 29–110 are disordered; the sequence is STFVTNSSGS…QPDHRDDENE (82 aa). Residues 61 to 71 carry the PIP-box motif; it reads QKGIGEFFRLS. Ser71 carries the phosphoserine modification. Over residues 71 to 80 the composition is skewed to basic and acidic residues; the sequence is SPKDSKKENQ. The KEN box motif lies at 77-79; that stretch reads KEN. The short motif at 84-96 is the Initiation motif element; the sequence is EAGSSGLGKAKRK.

Interacts (when monoubiquitinated at Lys-15 and Lys-24) with PCNA. Interacts with isoform 2/p33ING1b of ING1. Interacts with BRCA1. In terms of processing, monoubiquitinated at Lys-15 and Lys-24 during normal S phase, promoting its association with PCNA. Also diubiquitinated at these 2 sites. Following DNA damage, monoubiquitin chains at Lys-15 and Lys-24 are probably extended, leading to disrupt the interaction with PCNA. Polyubiquitinated by the APC/C complex at the mitotic exit, leading to its degradation by the proteasome.

Its subcellular location is the nucleus. The protein localises to the cytoplasm. The protein resides in the perinuclear region. PCNA-binding protein that acts as a regulator of DNA repair during DNA replication. Following DNA damage, the interaction with PCNA is disrupted, facilitating the interaction between monoubiquitinated PCNA and the translesion DNA synthesis DNA polymerase eta (POLH) at stalled replisomes, facilitating the bypass of replication-fork-blocking lesions. Also acts as a regulator of centrosome number. In Rattus norvegicus (Rat), this protein is PCNA-associated factor.